The chain runs to 123 residues: Testis-expressed protein 12 (123 aa).

A disordered region spans residues 1–41 (MMANHLVKPDSRNCKRARELEPQVSDSPQVSSLGKSESSLS). Over residues 7 to 21 (VKPDSRNCKRARELE) the composition is skewed to basic and acidic residues. The span at 31-41 (SSLGKSESSLS) shows a compositional bias: low complexity.

As to quaternary structure, interacts with SYCE2. In terms of tissue distribution, testis (at protein level). Detected in ovary. Expressed in both male and female germ cells.

It localises to the chromosome. Functionally, component of the transverse central element of synaptonemal complexes (SCS), formed between homologous chromosomes during meiotic prophase. Requires SYCP1 in order to be incorporated into the central element. This Mus musculus (Mouse) protein is Testis-expressed protein 12 (Tex12).